The following is a 271-amino-acid chain: Elongation factor Ts (271 aa).

The tract at residues 76 to 79 is involved in Mg(2+) ion dislocation from EF-Tu; it reads TDFV.

The protein belongs to the EF-Ts family.

The protein resides in the cytoplasm. Functionally, associates with the EF-Tu.GDP complex and induces the exchange of GDP to GTP. It remains bound to the aminoacyl-tRNA.EF-Tu.GTP complex up to the GTP hydrolysis stage on the ribosome. The protein is Elongation factor Ts of Saccharopolyspora erythraea (strain ATCC 11635 / DSM 40517 / JCM 4748 / NBRC 13426 / NCIMB 8594 / NRRL 2338).